The chain runs to 204 residues: Superoxide dismutase [Mn] (204 aa).

Positions 29, 84, 167, and 171 each coordinate Mn(2+).

Belongs to the iron/manganese superoxide dismutase family. In terms of assembly, homotetramer. Requires Mn(2+) as cofactor.

It catalyses the reaction 2 superoxide + 2 H(+) = H2O2 + O2. Its function is as follows. Destroys superoxide anion radicals which are normally produced within the cells and which are toxic to biological systems. This is Superoxide dismutase [Mn] (sodA) from Thermus thermophilus (strain ATCC BAA-163 / DSM 7039 / HB27).